Reading from the N-terminus, the 308-residue chain is UDP-N-acetylenolpyruvoylglucosamine reductase (308 aa).

The 166-residue stretch at 32 to 197 folds into the FAD-binding PCMH-type domain; sequence QTGGKADYYL…LEAAFTLAPG (166 aa). Residue arginine 176 is part of the active site. Serine 226 acts as the Proton donor in catalysis. Residue glutamate 296 is part of the active site.

Belongs to the MurB family. The cofactor is FAD.

Its subcellular location is the cytoplasm. It catalyses the reaction UDP-N-acetyl-alpha-D-muramate + NADP(+) = UDP-N-acetyl-3-O-(1-carboxyvinyl)-alpha-D-glucosamine + NADPH + H(+). Its pathway is cell wall biogenesis; peptidoglycan biosynthesis. Cell wall formation. The protein is UDP-N-acetylenolpyruvoylglucosamine reductase of Staphylococcus saprophyticus subsp. saprophyticus (strain ATCC 15305 / DSM 20229 / NCIMB 8711 / NCTC 7292 / S-41).